We begin with the raw amino-acid sequence, 175 residues long: Alpha-crystallin B chain (175 aa).

At Met1 the chain carries N-acetylmethionine. Ser19 carries the post-translational modification Phosphoserine. Ser41 carries an O-linked (GlcNAc) serine glycan. Residues Ser45 and Ser59 each carry the phosphoserine modification. A sHSP domain is found at Arg56–Glu164. His83 serves as a coordination point for Zn(2+). Lys92 is subject to N6-acetyllysine. His104, Glu106, His111, and His119 together coordinate Zn(2+). Positions Val142–Lys175 are disordered. Lys166 carries the N6-acetyllysine modification. O-linked (GlcNAc) threonine glycosylation is present at Thr170.

This sequence belongs to the small heat shock protein (HSP20) family. In terms of assembly, heteromer composed of three CRYAA and one CRYAB subunits. Aggregates with homologous proteins, including the small heat shock protein HSPB1, to form large heteromeric complexes. Inter-subunit bridging via zinc ions enhances stability, which is crucial as there is no protein turn over in the lens. Interacts with HSPBAP1 and TTN/titin. Interacts with TMEM109; in the cellular response to DNA damage. Interacts with DES; binds rapidly during early stages of DES filament assembly and a reduced binding seen in the later stages. Interacts with TMED10; the interaction mediates the translocation from the cytoplasm into the ERGIC (endoplasmic reticulum-Golgi intermediate compartment) and thereby secretion. Interacts with ATP6V1A and with MTOR, forming a ternary complex.

Its subcellular location is the cytoplasm. The protein localises to the nucleus. It localises to the secreted. It is found in the lysosome. Its function is as follows. May contribute to the transparency and refractive index of the lens. Has chaperone-like activity, preventing aggregation of various proteins under a wide range of stress conditions. In lens epithelial cells, stabilizes the ATP6V1A protein, preventing its degradation by the proteasome. The polypeptide is Alpha-crystallin B chain (CRYAB) (Macaca fascicularis (Crab-eating macaque)).